The primary structure comprises 877 residues: Phosphoenolpyruvate carboxylase (877 aa).

Residues His138 and Lys543 contribute to the active site.

This sequence belongs to the PEPCase type 1 family. The cofactor is Mg(2+).

It carries out the reaction oxaloacetate + phosphate = phosphoenolpyruvate + hydrogencarbonate. In terms of biological role, forms oxaloacetate, a four-carbon dicarboxylic acid source for the tricarboxylic acid cycle. This is Phosphoenolpyruvate carboxylase from Aeromonas salmonicida (strain A449).